A 458-amino-acid polypeptide reads, in one-letter code: Adenylosuccinate synthetase (458 aa).

GTP contacts are provided by residues 17–23 (GDEGKGK) and 45–47 (GHT). Asp-18 serves as the catalytic Proton acceptor. 2 residues coordinate Mg(2+): Asp-18 and Gly-45. IMP-binding positions include 18 to 21 (DEGK), 43 to 46 (NAGH), Thr-137, Arg-151, Gln-247, Thr-262, and Arg-330. Residue His-46 is the Proton donor of the active site. A substrate-binding site is contributed by 326–332 (VTTGRSR). GTP-binding positions include Arg-332, 358-360 (KLD), and 440-442 (STG).

This sequence belongs to the adenylosuccinate synthetase family. In terms of assembly, homodimer. The cofactor is Mg(2+).

It is found in the cytoplasm. The catalysed reaction is IMP + L-aspartate + GTP = N(6)-(1,2-dicarboxyethyl)-AMP + GDP + phosphate + 2 H(+). Its pathway is purine metabolism; AMP biosynthesis via de novo pathway; AMP from IMP: step 1/2. Plays an important role in the de novo pathway of purine nucleotide biosynthesis. Catalyzes the first committed step in the biosynthesis of AMP from IMP. In Albidiferax ferrireducens (strain ATCC BAA-621 / DSM 15236 / T118) (Rhodoferax ferrireducens), this protein is Adenylosuccinate synthetase.